A 231-amino-acid polypeptide reads, in one-letter code: Cytidylate kinase (231 aa).

Position 18-26 (G18–S26) interacts with ATP.

Belongs to the cytidylate kinase family. Type 1 subfamily.

The protein resides in the cytoplasm. It catalyses the reaction CMP + ATP = CDP + ADP. It carries out the reaction dCMP + ATP = dCDP + ADP. The sequence is that of Cytidylate kinase from Streptomyces griseus subsp. griseus (strain JCM 4626 / CBS 651.72 / NBRC 13350 / KCC S-0626 / ISP 5235).